A 303-amino-acid chain; its full sequence is Serine/threonine-protein phosphatase PP-X homolog 1 (303 aa).

Positions 51, 53, 79, and 111 each coordinate Mn(2+). The active-site Proton donor is the His112. Mn(2+) contacts are provided by His161 and His235.

Belongs to the PPP phosphatase family. PP-4 (PP-X) subfamily. Requires Mn(2+) as cofactor.

It carries out the reaction O-phospho-L-seryl-[protein] + H2O = L-seryl-[protein] + phosphate. It catalyses the reaction O-phospho-L-threonyl-[protein] + H2O = L-threonyl-[protein] + phosphate. The chain is Serine/threonine-protein phosphatase PP-X homolog 1 (Ppx1) from Paramecium tetraurelia.